The sequence spans 1798 residues: DNA polymerase II large subunit (1798 aa).

Positions Glu286 to Ala309 are disordered. The region spanning Val1184–Ile1319 is the DOD-type homing endonuclease domain. Residues Thr1699–Ser1798 form a disordered region. A compositionally biased stretch (low complexity) spans Gly1714–Ser1731. Positions Lys1733–Lys1753 are enriched in basic and acidic residues.

The protein belongs to the archaeal DNA polymerase II family. As to quaternary structure, heterodimer of a large subunit and a small subunit. This protein undergoes a protein self splicing that involves a post-translational excision of the intervening region (intein) followed by peptide ligation.

It carries out the reaction DNA(n) + a 2'-deoxyribonucleoside 5'-triphosphate = DNA(n+1) + diphosphate. The enzyme catalyses Exonucleolytic cleavage in the 3'- to 5'-direction to yield nucleoside 5'-phosphates.. Its function is as follows. Possesses two activities: a DNA synthesis (polymerase) and an exonucleolytic activity that degrades single-stranded DNA in the 3'- to 5'-direction. Has a template-primer preference which is characteristic of a replicative DNA polymerase. The protein is DNA polymerase II large subunit (polC) of Thermococcus kodakarensis (strain ATCC BAA-918 / JCM 12380 / KOD1) (Pyrococcus kodakaraensis (strain KOD1)).